Consider the following 131-residue polypeptide: Ribonuclease VapC42 (131 aa).

Residues 1–125 (MIVDTSAIVA…FRGDDFTHTD (125 aa)) form the PINc domain. The Mg(2+) site is built by D4 and D100.

This sequence belongs to the PINc/VapC protein family. Mg(2+) serves as cofactor.

Its function is as follows. Toxic component of a type II toxin-antitoxin (TA) system. An RNase. Its cognate antitoxin is VapB42. The chain is Ribonuclease VapC42 from Mycobacterium tuberculosis (strain CDC 1551 / Oshkosh).